A 67-amino-acid polypeptide reads, in one-letter code: Gallinacin-6 (67 aa).

An N-terminal signal peptide occupies residues 1–19 (MRILYLLLSVLFVVLQGVA). Positions 20-25 (GQPYFS) are excised as a propeptide. 3 disulfide bridges follow: cysteine 31/cysteine 60, cysteine 38/cysteine 53, and cysteine 43/cysteine 61.

It belongs to the beta-defensin family. In terms of tissue distribution, expressed in bone marrow, testis, ovary, lung and trachea. Expressed in the ovarian stroma, but not in the ovarian follicles.

The protein resides in the secreted. It is found in the cytoplasmic granule. In terms of biological role, has bactericidal activity. Potent activity against S.typhimurium and S.entiriditis. In Gallus gallus (Chicken), this protein is Gallinacin-6 (GAL6).